A 146-amino-acid polypeptide reads, in one-letter code: Ribonuclease H (146 aa).

The RNase H type-1 domain occupies 1–136 (MKHIEIYTDG…CDTLAREAAL (136 aa)). Aspartate 9, glutamate 47, aspartate 69, and aspartate 128 together coordinate Mg(2+).

Belongs to the RNase H family. Monomer. It depends on Mg(2+) as a cofactor.

The protein localises to the cytoplasm. The catalysed reaction is Endonucleolytic cleavage to 5'-phosphomonoester.. Functionally, endonuclease that specifically degrades the RNA of RNA-DNA hybrids. In Campylobacter jejuni subsp. jejuni serotype O:23/36 (strain 81-176), this protein is Ribonuclease H.